We begin with the raw amino-acid sequence, 221 residues long: Small ribosomal subunit protein uS3 (221 aa).

Positions 39–107 (IRNYIKEKLY…TVILNIIEVK (69 aa)) constitute a KH type-2 domain.

This sequence belongs to the universal ribosomal protein uS3 family. As to quaternary structure, part of the 30S ribosomal subunit. Forms a tight complex with proteins S10 and S14.

Functionally, binds the lower part of the 30S subunit head. Binds mRNA in the 70S ribosome, positioning it for translation. The sequence is that of Small ribosomal subunit protein uS3 from Caldanaerobacter subterraneus subsp. tengcongensis (strain DSM 15242 / JCM 11007 / NBRC 100824 / MB4) (Thermoanaerobacter tengcongensis).